We begin with the raw amino-acid sequence, 283 residues long: Probable aquaporin NIP4-2 (283 aa).

Methionine 1 is modified (N-acetylmethionine). A compositionally biased stretch (basic and acidic residues) spans 1–21 (MTSHGEEIEDEQISRIEKGNC). A disordered region spans residues 1-23 (MTSHGEEIEDEQISRIEKGNCKD). 2 helical membrane passes run 51 to 71 (GTYF…LYGG) and 77 to 97 (GICV…GHIS). Positions 102-104 (NPA) match the NPA 1 motif. The next 3 helical transmembrane spans lie at 120 to 140 (VPLY…TLRL), 161 to 181 (ALVA…GVAT), and 189 to 209 (LAGI…GPIS). Positions 214-216 (NPA) match the NPA 2 motif. A helical transmembrane segment spans residues 231–251 (IWVYIVGPFVGIFAGGFVYNF). Phosphoserine is present on serine 267.

It belongs to the MIP/aquaporin (TC 1.A.8) family. NIP (TC 1.A.8.12) subfamily.

The protein resides in the membrane. Its function is as follows. Aquaporins facilitate the transport of water and small neutral solutes across cell membranes. The protein is Probable aquaporin NIP4-2 (NIP4-2) of Arabidopsis thaliana (Mouse-ear cress).